A 466-amino-acid polypeptide reads, in one-letter code: UDP-N-acetylmuramoylalanine--D-glutamate ligase (466 aa).

Position 139 to 145 (139 to 145 (GTAGKGG)) interacts with ATP.

Belongs to the MurCDEF family.

The protein resides in the cytoplasm. It catalyses the reaction UDP-N-acetyl-alpha-D-muramoyl-L-alanine + D-glutamate + ATP = UDP-N-acetyl-alpha-D-muramoyl-L-alanyl-D-glutamate + ADP + phosphate + H(+). The protein operates within cell wall biogenesis; peptidoglycan biosynthesis. Functionally, cell wall formation. Catalyzes the addition of glutamate to the nucleotide precursor UDP-N-acetylmuramoyl-L-alanine (UMA). This Deinococcus geothermalis (strain DSM 11300 / CIP 105573 / AG-3a) protein is UDP-N-acetylmuramoylalanine--D-glutamate ligase.